A 60-amino-acid polypeptide reads, in one-letter code: Large ribosomal subunit protein uL30 (60 aa).

It belongs to the universal ribosomal protein uL30 family. Part of the 50S ribosomal subunit.

This chain is Large ribosomal subunit protein uL30, found in Leuconostoc mesenteroides subsp. mesenteroides (strain ATCC 8293 / DSM 20343 / BCRC 11652 / CCM 1803 / JCM 6124 / NCDO 523 / NBRC 100496 / NCIMB 8023 / NCTC 12954 / NRRL B-1118 / 37Y).